We begin with the raw amino-acid sequence, 103 residues long: Large ribosomal subunit protein bL21 (103 aa).

The protein belongs to the bacterial ribosomal protein bL21 family. Part of the 50S ribosomal subunit. Contacts protein L20.

In terms of biological role, this protein binds to 23S rRNA in the presence of protein L20. The sequence is that of Large ribosomal subunit protein bL21 from Nocardia farcinica (strain IFM 10152).